The sequence spans 170 residues: tRNA-splicing endonuclease (170 aa).

Catalysis depends on residues Tyr-110, His-116, and Lys-147.

It belongs to the tRNA-intron endonuclease family. Archaeal short subfamily. Homotetramer; although the tetramer contains four active sites, only two participate in the cleavage. Therefore, it should be considered as a dimer of dimers.

It carries out the reaction pretRNA = a 3'-half-tRNA molecule with a 5'-OH end + a 5'-half-tRNA molecule with a 2',3'-cyclic phosphate end + an intron with a 2',3'-cyclic phosphate and a 5'-hydroxyl terminus.. Endonuclease that removes tRNA introns. Cleaves pre-tRNA at the 5'- and 3'-splice sites to release the intron. The products are an intron and two tRNA half-molecules bearing 2',3' cyclic phosphate and 5'-OH termini. Recognizes a pseudosymmetric substrate in which 2 bulged loops of 3 bases are separated by a stem of 4 bp. The chain is tRNA-splicing endonuclease from Pyrococcus furiosus (strain ATCC 43587 / DSM 3638 / JCM 8422 / Vc1).